The sequence spans 322 residues: Eukaryotic translation initiation factor 3 subunit I (322 aa).

5 WD repeats span residues 4-43 (GHER…RLGT), 46-85 (GHQG…VIAS), 141-180 (MVES…KVVD), 184-223 (DHTA…CLKT), and 281-322 (GHFG…NIFE).

This sequence belongs to the eIF-3 subunit I family. Component of the eukaryotic translation initiation factor 3 (eIF-3) complex. The eIF-3 complex interacts with pix.

The protein localises to the cytoplasm. Its function is as follows. Component of the eukaryotic translation initiation factor 3 (eIF-3) complex, which is involved in protein synthesis of a specialized repertoire of mRNAs and, together with other initiation factors, stimulates binding of mRNA and methionyl-tRNAi to the 40S ribosome. The eIF-3 complex specifically targets and initiates translation of a subset of mRNAs involved in cell proliferation. This chain is Eukaryotic translation initiation factor 3 subunit I, found in Drosophila virilis (Fruit fly).